Reading from the N-terminus, the 298-residue chain is 4-hydroxy-tetrahydrodipicolinate synthase (298 aa).

Thr-51 provides a ligand contact to pyruvate. Tyr-139 (proton donor/acceptor) is an active-site residue. Lys-167 serves as the catalytic Schiff-base intermediate with substrate. A pyruvate-binding site is contributed by Ile-209.

Belongs to the DapA family. Homotetramer; dimer of dimers.

It localises to the cytoplasm. It catalyses the reaction L-aspartate 4-semialdehyde + pyruvate = (2S,4S)-4-hydroxy-2,3,4,5-tetrahydrodipicolinate + H2O + H(+). It participates in amino-acid biosynthesis; L-lysine biosynthesis via DAP pathway; (S)-tetrahydrodipicolinate from L-aspartate: step 3/4. Functionally, catalyzes the condensation of (S)-aspartate-beta-semialdehyde [(S)-ASA] and pyruvate to 4-hydroxy-tetrahydrodipicolinate (HTPA). This is 4-hydroxy-tetrahydrodipicolinate synthase from Haemophilus influenzae (strain ATCC 51907 / DSM 11121 / KW20 / Rd).